The sequence spans 147 residues: Austinoid biosynthesis cluster protein H (147 aa).

This sequence belongs to the trt14 isomerase family. As to quaternary structure, homodimer.

It functions in the pathway secondary metabolite biosynthesis; terpenoid biosynthesis. Part of the gene cluster that mediates the biosynthesis of calidodehydroaustin, a fungal meroterpenoid. The first step of the pathway is the synthesis of 3,5-dimethylorsellinic acid by the polyketide synthase ausA. 3,5-dimethylorsellinic acid is then prenylated by the polyprenyl transferase ausN. Further epoxidation by the FAD-dependent monooxygenase ausM and cyclization by the probable terpene cyclase ausL lead to the formation of protoaustinoid A. Protoaustinoid A is then oxidized to spiro-lactone preaustinoid A3 by the combined action of the FAD-binding monooxygenases ausB and ausC, and the dioxygenase ausE. Acid-catalyzed keto-rearrangement and ring contraction of the tetraketide portion of preaustinoid A3 by ausJ lead to the formation of preaustinoid A4. The aldo-keto reductase ausK, with the help of ausH, is involved in the next step by transforming preaustinoid A4 into isoaustinone which is in turn hydroxylated by the P450 monooxygenase ausI to form austinolide. The cytochrome P450 monooxygenase ausG modifies austinolide to austinol. Austinol is further acetylated to austin by the O-acetyltransferase ausP, which spontaneously changes to dehydroaustin. The cytochrome P450 monooxygenase ausR then converts dehydroaustin is into 7-dehydrodehydroaustin. The hydroxylation catalyzed by ausR permits the O-acetyltransferase ausQ to add an additional acetyl group to the molecule, leading to the formation of acetoxydehydroaustin. The short chain dehydrogenase ausT catalyzes the reduction of the double bond present between carbon atoms 1 and 2 to convert 7-dehydrodehydroaustin into 1,2-dihydro-7-hydroxydehydroaustin. AusQ catalyzes not only an acetylation reaction but also the addition of the PKS ausV diketide product to 1,2-dihydro-7-hydroxydehydroaustin, forming precalidodehydroaustin. Finally, the iron/alpha-ketoglutarate-dependent dioxygenase converts precalidodehydroaustin into calidodehydroaustin. This chain is Austinoid biosynthesis cluster protein H, found in Aspergillus calidoustus.